The sequence spans 263 residues: Phosphatidylglycerol--prolipoprotein diacylglyceryl transferase (263 aa).

4 helical membrane-spanning segments follow: residues 6–26 (VIFS…VLGI), 50–70 (LLTA…VLIY), 85–105 (TWEG…AVII), and 112–132 (IPTF…LFLG). Arg133 is an a 1,2-diacyl-sn-glycero-3-phospho-(1'-sn-glycerol) binding site. Transmembrane regions (helical) follow at residues 169 to 189 (LYEA…LFFL), 197 to 217 (GALT…VEFF), and 233 to 253 (MGQL…LGAL).

Belongs to the Lgt family.

The protein resides in the cell membrane. The catalysed reaction is L-cysteinyl-[prolipoprotein] + a 1,2-diacyl-sn-glycero-3-phospho-(1'-sn-glycerol) = an S-1,2-diacyl-sn-glyceryl-L-cysteinyl-[prolipoprotein] + sn-glycerol 1-phosphate + H(+). It functions in the pathway protein modification; lipoprotein biosynthesis (diacylglyceryl transfer). Functionally, catalyzes the transfer of the diacylglyceryl group from phosphatidylglycerol to the sulfhydryl group of the N-terminal cysteine of a prolipoprotein, the first step in the formation of mature lipoproteins. This Wolbachia pipientis wMel protein is Phosphatidylglycerol--prolipoprotein diacylglyceryl transferase.